Here is a 226-residue protein sequence, read N- to C-terminus: MSFVESGRRSAPLRRRPGTPVPFARPAYSVFSQGDSWGEGEVEEEEGCDQVARDLRAEFSAGSSSKLRKDPVLQPDGDGSPVLPDKRNGIFSADAGGKALARRWPVQVLSILCSLLFAILLACLLAITYLIVKELHAENLKNEDDVNTGLLGFWSLLIISLTAGFSCCSFSWTVTYFDSFEPGMFPPTPLSPARFKKMTGHSFHMGYSMAILNGIVAALTVAWCLM.

Residues 1-26 (MSFVESGRRSAPLRRRPGTPVPFARP) are disordered. A phosphoserine mark is found at serine 2, serine 36, serine 60, serine 65, and serine 80. The segment at 62-81 (GSSSKLRKDPVLQPDGDGSP) is disordered. The next 3 membrane-spanning stretches (helical) occupy residues 111 to 131 (ILCSLLFAILLACLLAITYLI), 150 to 170 (LLGFWSLLIISLTAGFSCCSF), and 205 to 225 (MGYSMAILNGIVAALTVAWCL).

This sequence belongs to the ARL6IP6 family.

It is found in the nucleus inner membrane. The protein is ADP-ribosylation factor-like protein 6-interacting protein 6 (ARL6IP6) of Bos taurus (Bovine).